The sequence spans 612 residues: Rhotekin-2 (612 aa).

The region spanning 3–79 is the REM-1 domain; the sequence is IKRKKIRESA…LRSQMGESNT (77 aa). The PH domain maps to 285 to 392; sequence DEAMMGFLNQ…WMEAFWQHFY (108 aa). Disordered stretches follow at residues 483-530 and 574-612; these read RNKP…SDKE and ENKAELDTGTQEPIKPVPTPRQKSLREKLDPRVWLQSQV. Residues 486–498 show a composition bias toward low complexity; sequence PPLLSSDDPSTSS.

This is Rhotekin-2 (rtkn2) from Xenopus laevis (African clawed frog).